Consider the following 215-residue polypeptide: Large ribosomal subunit protein uL4 (215 aa).

The tract at residues 43-100 (AAKRQGTHSTKTRGEVSGGGKKPYRQKGSGRARQGSTRAPQFTGGGTVHGPKPRDYSQ) is disordered.

The protein belongs to the universal ribosomal protein uL4 family. In terms of assembly, part of the 50S ribosomal subunit.

Its function is as follows. One of the primary rRNA binding proteins, this protein initially binds near the 5'-end of the 23S rRNA. It is important during the early stages of 50S assembly. It makes multiple contacts with different domains of the 23S rRNA in the assembled 50S subunit and ribosome. Functionally, forms part of the polypeptide exit tunnel. In Mycolicibacterium smegmatis (Mycobacterium smegmatis), this protein is Large ribosomal subunit protein uL4.